Reading from the N-terminus, the 826-residue chain is E3 ubiquitin ligase PARAQUAT TOLERANCE 3 (826 aa).

One can recognise a DWNN domain in the interval 3–76 (IYYKFKSARD…NTSVLIRRVP (74 aa)). The CCHC-type zinc finger occupies 203–216 (CHRCNVSGHFIQHC). At Ser278 the chain carries Phosphoserine. The RING-type; degenerate zinc-finger motif lies at 288 to 326 (CPLCKEVMRDAALASKCCLKSYCDKCIRDHIIAKSMCVC). Polar residues-rich tracts occupy residues 356–365 (SAENAGSMCQ), 396–406 (PSNNNETSTLK), and 435–454 (NIQG…NTQP). Disordered stretches follow at residues 356–406 (SAEN…STLK), 435–488 (NIQG…GPDY), and 585–826 (HPIM…RARA). Residue Ser397 is modified to Phosphoserine. Over residues 588–624 (MGREEFEAKKTEMKRKRENEIRRSEGGNVVRDSEKSR) the composition is skewed to basic and acidic residues. Residues 625-635 (IMNNSAVTSSP) are compositionally biased toward polar residues. Over residues 651–667 (DYDRRRRSDRSSPERQS) the composition is skewed to basic and acidic residues. 2 consecutive short sequence motifs (nuclear localization signal) follow at residues 668–675 (SRRFTSPP) and 695–702 (DRRRDRPR). Residues 680 to 706 (RKSERDRHHDLDSEHDRRRDRPRETDR) show a composition bias toward basic and acidic residues. Positions 790–799 (FKRKPSRYKR) are enriched in basic residues. Ser800 carries the phosphoserine modification. The span at 809–826 (GDEHFRHSKRSKGERARA) shows a compositional bias: basic and acidic residues.

In terms of assembly, interacts with PRMT13/PRMT4B in the nucleus. Expressed constitutively in both shoot and root tissues.

The protein localises to the nucleus. The catalysed reaction is S-ubiquitinyl-[E2 ubiquitin-conjugating enzyme]-L-cysteine + [acceptor protein]-L-lysine = [E2 ubiquitin-conjugating enzyme]-L-cysteine + N(6)-ubiquitinyl-[acceptor protein]-L-lysine.. E3 ubiquitin ligase acting as a negative regulator of oxidative stress tolerance, probably by mediating 26S proteasome-mediated degradation of PRMT13/PRMT4B, thus preventing APX1 and GPX1 accumulation via the reduction of histone H3 methylation (H3R17me2a). Confers sensitivity to cadmium CdCl(2) and salt NaCl stresses. This chain is E3 ubiquitin ligase PARAQUAT TOLERANCE 3, found in Arabidopsis thaliana (Mouse-ear cress).